A 481-amino-acid polypeptide reads, in one-letter code: Tryptophan 5-hydroxylase (481 aa).

Residues 56–131 form the ACT domain; the sequence is SVIFSLKNEI…NVISMSPPEN (76 aa). Tyr-272, Arg-294, and Thr-302 together coordinate L-tryptophan. His-309, His-314, and Glu-354 together coordinate Fe cation. Residues Ser-373 and Ile-403 each contribute to the L-tryptophan site.

It belongs to the biopterin-dependent aromatic amino acid hydroxylase family. Homotetramer. The cofactor is Fe(2+).

The enzyme catalyses (6R)-L-erythro-5,6,7,8-tetrahydrobiopterin + L-tryptophan + O2 = 5-hydroxy-L-tryptophan + (4aS,6R)-4a-hydroxy-L-erythro-5,6,7,8-tetrahydrobiopterin. Its pathway is aromatic compound metabolism; serotonin biosynthesis; serotonin from L-tryptophan: step 1/2. In terms of biological role, oxidizes L-tryptophan to 5-hydroxy-l-tryptophan in the rate-determining step of serotonin biosynthesis. This chain is Tryptophan 5-hydroxylase (tph1), found in Xenopus laevis (African clawed frog).